A 570-amino-acid polypeptide reads, in one-letter code: Zeta-carotene desaturase, chloroplastic/chromoplastic (570 aa).

Positions 1-16 (MASVAATTTLAPALAP) are enriched in low complexity. Residues 1 to 33 (MASVAATTTLAPALAPRRARPGTGLVPPRRASA) are disordered.

Belongs to the zeta carotene desaturase family. The cofactor is NAD(+). NADP(+) serves as cofactor. Requires FAD as cofactor.

It localises to the plastid. The protein resides in the chloroplast. Its subcellular location is the chromoplast. The enzyme catalyses 9,9'-di-cis-zeta-carotene + 2 a quinone = 7,7',9,9'-tetra-cis-lycopene + 2 a quinol. It participates in carotenoid biosynthesis; lycopene biosynthesis. Functionally, catalyzes the conversion of zeta-carotene to lycopene via the intermediary of neurosporene. It carries out two consecutive desaturations (introduction of double bonds) at positions C-7 and C-7'. In Zea mays (Maize), this protein is Zeta-carotene desaturase, chloroplastic/chromoplastic (ZDS1).